Consider the following 839-residue polypeptide: Toll-like receptor 4 (839 aa).

The signal sequence occupies residues 1–23; it reads MMSASRLAGTLIPAMAFLSCVRP. At 24–631 the chain is on the extracellular side; it reads ESWEPCVEVV…SLNITCQMNK (608 aa). Residues Cys-29 and Cys-40 are joined by a disulfide bond. Residue Asn-35 is glycosylated (N-linked (GlcNAc...) asparagine). 5 LRR repeats span residues 55 to 76, 79 to 100, 103 to 124, 127 to 148, and 151 to 172; these read STKN…SFFS, ELQV…AYQS, HLST…AFSG, SLQK…PIGH, and TLKE…EYFS. Asn-173 carries N-linked (GlcNAc...) asparagine glycosylation. LRR repeat units lie at residues 176–199, 205–225, and 227–247; these read NLEH…RVLH, NLSL…AFKE, and RLHK…KTCI. N-linked (GlcNAc...) asparagine glycosylation occurs at Asn-205. The cysteines at positions 281 and 306 are disulfide-linked. N-linked (GlcNAc...) asparagine glycans are attached at residues Asn-282 and Asn-309. LRR repeat units follow at residues 331-351, 352-373, 374-394, 400-422, 423-444, 448-456, 472-495, 497-518, 521-542, and 545-565; these read GWQH…LKLK, SLKR…VDLP, SLEF…CSQS, SLKY…LGLE, QLEH…SVFL, NLIYLDISH, SLEV…FTEL, NLTF…AFNS, SLQV…PYKC, and SLQV…QELQ. Cys-390 and Cys-391 are disulfide-bonded. Asn-497 and Asn-526 each carry an N-linked (GlcNAc...) asparagine glycan. The N-linked (GlcNAc...) asparagine glycan is linked to Asn-575. The LRRCT domain maps to 579–629; that stretch reads NDFACTCEHQSFLQWIKDQRQLLVEVERMECATPSDKQGMPVLSLNITCQM. Cystine bridges form between Cys-583–Cys-609 and Cys-585–Cys-627. 2 N-linked (GlcNAc...) asparagine glycosylation sites follow: Asn-624 and Asn-630. The chain crosses the membrane as a helical span at residues 632-652; that stretch reads TIIGVSVLSVLVVSVVAVLVY. At 653–839 the chain is on the cytoplasmic side; that stretch reads KFYFHLMLLA…GCNWQEATSI (187 aa). The TIR domain maps to 672–815; that stretch reads NIYDAFVIYS…IFWRRLRKAL (144 aa).

This sequence belongs to the Toll-like receptor family. As to quaternary structure, belongs to the lipopolysaccharide (LPS) receptor, a multi-protein complex containing at least CD14, LY96 and TLR4. Binding to bacterial LPS leads to homodimerization. Interacts with LY96 via the extracellular domain. Interacts with MYD88. Interacts (via TIR domains) with TIRAP. Interacts with TICAM2. Interacts with NOX4. Interacts with CNPY3. Interacts with HSP90B1. The interaction with both CNPY3 and HSP90B1 is required for proper folding in the endoplasmic reticulum. Interacts with MAP3K21; this interaction leads to negative regulation of TLR4 signaling. Interacts with CD36, following CD36 stimulation by oxLDL or amyloid-beta 42, and forms a heterodimer with TLR6. The trimeric complex is internalized and triggers inflammatory response. LYN kinase activity facilitates TLR4-TLR6 heterodimerization and signal initiation. Interacts with TICAM1 in response to LPS in a WDFY1-dependent manner. Interacts with WDFY1 in response to LPS. Interacts with SMPDL3B. Interacts with CEACAM1; upon lipopolysaccharide stimulation, forms a complex including TLR4 and the phosphorylated form of SYK and CEACAM1, which in turn, recruits PTPN6 that dephosphorylates SYK, reducing the production of reactive oxygen species (ROS) and lysosome disruption, which in turn, reduces the activity of the inflammasome. Interacts with RFTN1; the interaction occurs in response to lipopolysaccharide stimulation. Interacts with SCIMP; the interaction occurs in response to lipopolysaccharide stimulation and is enhanced by phosphorylation of SCIMP by LYN. This interaction facilitates the phosphorylation of TLR4 by LYN which elicits a selective cytokine response in macrophages. Interacts with TRAF3IP3. Interacts with TREM1; this interaction enhances TLR4-mediated inflammatory response. Interacts with ZG16B/PAUF. Interacts with CD82; this interaction inhibits TLR4-mediated signaling pathway. Interacts with neutrophil recruitment protein from Aedes aegypti saliva; the interaction probably promotes activation of canonical NF-kappa-B signaling in skin-resident macrophages and subsequent expression of neutrophil chemoattractants. In terms of assembly, (Microbial infection) In case of infection, interacts with uropathogenic E.coli protein TcpC. (Microbial infection) In case of infection, interacts with B.melitensis protein TcpB; TcpB abolishes the TLR4-TIRAP interaction in vitro. As to quaternary structure, (Microbial infection) Interacts with ebolavirus protein GP; this interaction leads to the production of proinflammatory cytokines and suppressor of cytokine signaling 1/SOCS1. Post-translationally, N-Glycosylation of Asn-526 and Asn-575 by STT3A-containing OST-A complex is necessary for the expression of TLR4 on the cell surface and the LPS-response. Likewise, mutants lacking two or more of the other N-glycosylation sites were deficient in interaction with LPS. In terms of processing, phosphorylated on tyrosine residues by LYN after binding lipopolysaccharide. Ubiquitinated by RNF128 via 'Lys-28'-linked polyubiquitin chains, leading to proteasomal degradation. As to expression, highly expressed in placenta, spleen and peripheral blood leukocytes. Detected in monocytes, macrophages, dendritic cells and several types of T-cells. Expressed in pancreatic cancer cells but not in normal pancreatic cells (at protein level).

The protein localises to the cell membrane. It is found in the early endosome. The protein resides in the cell projection. Its subcellular location is the ruffle. In terms of biological role, transmembrane receptor that functions as a pattern recognition receptor recognizing pathogen- and damage-associated molecular patterns (PAMPs and DAMPs) to induce innate immune responses via downstream signaling pathways. At the plasma membrane, cooperates with LY96 to mediate the innate immune response to bacterial lipopolysaccharide (LPS). Also involved in LPS-independent inflammatory responses triggered by free fatty acids, such as palmitate, and Ni(2+). Mechanistically, acts via MYD88, TIRAP and TRAF6, leading to NF-kappa-B activation, cytokine secretion and the inflammatory response. Alternatively, CD14-mediated TLR4 internalization via endocytosis is associated with the initiation of a MYD88-independent signaling via the TICAM1-TBK1-IRF3 axis leading to type I interferon production. In addition to the secretion of proinflammatory cytokines, initiates the activation of NLRP3 inflammasome and formation of a positive feedback loop between autophagy and NF-kappa-B signaling cascade. In complex with TLR6, promotes inflammation in monocytes/macrophages by associating with TLR6 and the receptor CD86. Upon ligand binding, such as oxLDL or amyloid-beta 42, the TLR4:TLR6 complex is internalized and triggers inflammatory response, leading to NF-kappa-B-dependent production of CXCL1, CXCL2 and CCL9 cytokines, via MYD88 signaling pathway, and CCL5 cytokine, via TICAM1 signaling pathway. In myeloid dendritic cells, vesicular stomatitis virus glycoprotein G but not LPS promotes the activation of IRF7, leading to type I IFN production in a CD14-dependent manner. Required for the migration-promoting effects of ZG16B/PAUF on pancreatic cancer cells. This Homo sapiens (Human) protein is Toll-like receptor 4 (TLR4).